The chain runs to 378 residues: Peptide chain release factor RF2 (378 aa).

Position 253 is an N5-methylglutamine (Gln-253).

This sequence belongs to the prokaryotic/mitochondrial release factor family. As to quaternary structure, interacts with the ribosome. Interacts with ribosomal protein L11. Recruited to stalled E.coli ribosomes by E.coli ArfA.

Its subcellular location is the cytoplasm. Functionally, peptide chain release factor 2 directs the termination of translation in response to the peptide chain termination codons UGA and UAA. In endogenous ribosomes interacts with P-site tRNA and 23S rRNA. In the presence of truncated mRNA in the 70S ribosome, ArfA and RF2 interact such that the GGQ peptide hydrolysis motif of RF2 rises into the peptidyl-transferase center and releases the ribosome. Recruited to stalled E.coli 70S ribosomes by E.coli ArfA, but cannot be functionally accomodated in the peptidyl-transferase center. Note T.thermophilus probably does not encode arfA. This is Peptide chain release factor RF2 (prfB) from Thermus thermophilus (strain ATCC 27634 / DSM 579 / HB8).